A 330-amino-acid chain; its full sequence is D-lactate dehydrogenase (330 aa).

Residues 156–157, Asp-176, 206–207, 233–235, and Asp-259 each bind NAD(+); these read RI, VP, and AAR. The active site involves Arg-235. Residue Glu-264 is part of the active site. His-296 serves as the catalytic Proton donor.

The protein belongs to the D-isomer specific 2-hydroxyacid dehydrogenase family.

It catalyses the reaction (R)-lactate + NAD(+) = pyruvate + NADH + H(+). The protein is D-lactate dehydrogenase (ldhD) of Staphylococcus epidermidis (strain ATCC 35984 / DSM 28319 / BCRC 17069 / CCUG 31568 / BM 3577 / RP62A).